Consider the following 426-residue polypeptide: Serine--tRNA ligase (426 aa).

233 to 235 (TAE) lines the L-serine pocket. An ATP-binding site is contributed by 264–266 (RSE). Position 287 (Glu287) interacts with L-serine. 351–354 (EISS) contributes to the ATP binding site. Ser387 contributes to the L-serine binding site.

Belongs to the class-II aminoacyl-tRNA synthetase family. Type-1 seryl-tRNA synthetase subfamily. In terms of assembly, homodimer. The tRNA molecule binds across the dimer.

It is found in the cytoplasm. The enzyme catalyses tRNA(Ser) + L-serine + ATP = L-seryl-tRNA(Ser) + AMP + diphosphate + H(+). It carries out the reaction tRNA(Sec) + L-serine + ATP = L-seryl-tRNA(Sec) + AMP + diphosphate + H(+). It functions in the pathway aminoacyl-tRNA biosynthesis; selenocysteinyl-tRNA(Sec) biosynthesis; L-seryl-tRNA(Sec) from L-serine and tRNA(Sec): step 1/1. Its function is as follows. Catalyzes the attachment of serine to tRNA(Ser). Is also able to aminoacylate tRNA(Sec) with serine, to form the misacylated tRNA L-seryl-tRNA(Sec), which will be further converted into selenocysteinyl-tRNA(Sec). The chain is Serine--tRNA ligase from Pseudomonas putida (strain W619).